The chain runs to 96 residues: Protein Vpr (96 aa).

Residues 1–42 (MEQAPEDQGPQREPHNEWTLELLEELKNEAVRHFPRIWLHGL) form a homooligomerization region. Serine 79, serine 94, and serine 96 each carry phosphoserine; by host.

This sequence belongs to the HIV-1 VPR protein family. In terms of assembly, homooligomer, may form homodimer. Interacts with p6-gag region of the Pr55 Gag precursor protein through a (Leu-X-X)4 motif near the C-terminus of the P6gag protein. Interacts with host UNG. May interact with host RAD23A/HHR23A. Interacts with host VPRBP/DCAF1, leading to hijack the CUL4A-RBX1-DDB1-DCAF1/VPRBP complex, mediating ubiquitination of host proteins such as TERT and ZGPAT and arrest of the cell cycle in G2 phase. Phosphorylated on several residues by host. These phosphorylations regulate VPR activity for the nuclear import of the HIV-1 pre-integration complex.

The protein resides in the virion. Its subcellular location is the host nucleus. The protein localises to the host extracellular space. Its function is as follows. During virus entry, plays a role in the transport of the viral pre-integration (PIC) complex to the host nucleus. This function is crucial for viral infection of non-dividing macrophages. May act directly at the nuclear pore complex, by binding nucleoporins phenylalanine-glycine (FG)-repeat regions. In terms of biological role, during virus replication, may deplete host UNG protein, and incude G2-M cell cycle arrest. Acts by targeting specific host proteins for degradation by the 26S proteasome, through association with the cellular CUL4A-DDB1 E3 ligase complex by direct interaction with host VPRPB/DCAF-1. Cell cycle arrest reportedly occurs within hours of infection and is not blocked by antiviral agents, suggesting that it is initiated by the VPR carried into the virion. Additionally, VPR induces apoptosis in a cell cycle dependent manner suggesting that these two effects are mechanistically linked. Detected in the serum and cerebrospinal fluid of AIDS patient, VPR may also induce cell death to bystander cells. In Human immunodeficiency virus type 1 group M subtype B (isolate BRU/LAI) (HIV-1), this protein is Protein Vpr.